The sequence spans 422 residues: E3 ubiquitin-protein ligase CBLL2 (422 aa).

The RING-type zinc finger occupies 54–94; that stretch reads CDKCDLPIKIYGRIIPCKHAFCYNCANLYDKIGYKICPRCS. The HYB domain stretch occupies residues 93 to 151; sequence CSYPVLRIEEHKRGSVFMCSVVQGCKRTYLSQKSLQAHIKRRHKRARKQVASASLEKLR. A C2H2-type zinc finger spans residues 109–135; it reads FMCSVVQGCKRTYLSQKSLQAHIKRRH. 2 disordered regions span residues 190–213 and 378–422; these read MQQM…PELS and QTDA…HRPY. Over residues 195–205 the composition is skewed to basic and acidic residues; that stretch reads HEQHNQPHKDL. The span at 393 to 405 shows a compositional bias: pro residues; sequence LPPPPPTWSPPPS. Over residues 410–422 the composition is skewed to basic residues; the sequence is GSHHSYQRRHRPY.

In terms of assembly, homodimer.

The protein localises to the cytoplasm. The catalysed reaction is S-ubiquitinyl-[E2 ubiquitin-conjugating enzyme]-L-cysteine + [acceptor protein]-L-lysine = [E2 ubiquitin-conjugating enzyme]-L-cysteine + N(6)-ubiquitinyl-[acceptor protein]-L-lysine.. The protein operates within protein modification; protein ubiquitination. In terms of biological role, E3 ubiquitin ligase catalyzing the covalent attachment of ubiquitin moieties onto substrate proteins. May operate on tyrosine-phosphorylated SRC substrates. The chain is E3 ubiquitin-protein ligase CBLL2 (CBLL2) from Macaca fascicularis (Crab-eating macaque).